Consider the following 495-residue polypeptide: Cytochrome P450 monooxygenase aneF (495 aa).

The helical transmembrane segment at 1–21 (MIAGLVLVVLLTKYLQRVFLH) threads the bilayer. N47 is a glycosylation site (N-linked (GlcNAc...) asparagine). C437 provides a ligand contact to heme.

Belongs to the cytochrome P450 family. Heme is required as a cofactor.

It is found in the membrane. It carries out the reaction dauca-4,7-diene + 3 reduced [NADPH--hemoprotein reductase] + 3 O2 = asperaculane D + 3 oxidized [NADPH--hemoprotein reductase] + 4 H2O + 4 H(+). Its pathway is secondary metabolite biosynthesis. Cytochrome P450 monooxygenase; part of the gene cluster that mediates the biosynthesis of aculenes, a unique type of norsesquiterpenes that contain a nordaucane skeleton linked to an L-proline moiety and are of mixed biosynthetic origin. The pathway begins with the synthesis of dauca-4,7-diene by the terpene cyclase aneC using farnesyl pyrophosphate (FPP) as substrate. The cytochrome P450 monooxygenase aneF then performs the initial oxidation at C-12 of dauca-4,7-diene to yield asperaculane D. Asperaculane D is substrate of the cytochrome P450 monooxygenase aneD for C-10 hydroxylation to yield asperaculane E. The cytochrome P450 monooxygenase aneG then converts asperaculane E into aculene D via C-2 oxidation. The monomodular nonribosomal peptide synthtase aneB adenylates L-proline and the thiohydrolase aneE transfers this activated L-proline derivative to aculenes D and C to produce respectively aculenes B and A. The dioxygenase aneA converts aculene D into aculene C, and aculene B into aculene A by introducing the 5,6-alkene moiety. Asperculanes A, B, C and F, as well as 14-prolyl asperculane C, might be shunt products of the pathway. The chain is Cytochrome P450 monooxygenase aneF from Aspergillus aculeatus (strain ATCC 16872 / CBS 172.66 / WB 5094).